The following is a 1213-amino-acid chain: A disintegrin and metalloproteinase with thrombospondin motifs 2 (1213 aa).

The N-terminal stretch at 1–28 is a signal peptide; the sequence is MDPPAGAARRLLCPALLLLLLPPPPLLL. Residues 29 to 260 constitute a propeptide that is removed on maturation; that stretch reads LPPPPASVRL…INSSRRRVRR (232 aa). A glycan (N-linked (GlcNAc...) asparagine) is linked at Asn111. A disordered region spans residues 211–232; the sequence is YRRPPTPKPPPVSEPQALDTGV. The span at 214–223 shows a compositional bias: pro residues; that stretch reads PPTPKPPPVS. Residue Asn252 is glycosylated (N-linked (GlcNAc...) asparagine). In terms of domain architecture, Peptidase M12B spans 267–471; the sequence is YNIEVLLGVD…HSYDCLRDDP (205 aa). 10 cysteine pairs are disulfide-bonded: Cys344/Cys393, Cys387/Cys466, Cys426/Cys452, Cys493/Cys518, Cys504/Cys527, Cys513/Cys546, Cys540/Cys551, Cys574/Cys611, Cys578/Cys616, and Cys589/Cys601. His409 is a binding site for Zn(2+). Residue Glu410 is part of the active site. Positions 413 and 419 each coordinate Zn(2+). Residues 480-560 enclose the Disintegrin domain; it reads PQLPGLHYSM…CIWLTPDILK (81 aa). Positions 561–617 constitute a TSP type-1 1 domain; sequence RDGNWGAWTPFGSCSRTCGTGVKFRTRQCDNPHPANGGRTCSGLAYDFQLCNPQDCP. The Cell attachment site signature appears at 692-694; that stretch reads RGD. Residues 723 to 851 are spacer; the sequence is CKVVKGTFTR…LNVDDNNVLE (129 aa). TSP type-1 domains follow at residues 855–913, 915–975, and 976–1030; these read VRHE…NPQE, SQPV…NREL, and CPGR…APCP. Asn949, Asn950, and Asn994 each carry an N-linked (GlcNAc...) asparagine glycan. Disulfide bonds link Cys988/Cys1024, Cys992/Cys1029, and Cys1003/Cys1013. Asn1032 carries N-linked (GlcNAc...) asparagine glycosylation. The PLAC domain maps to 1060 to 1098; sequence SKDQCQGDKSMFCRMEVLSRYCSIPSYNKLCCKSCNPPR. N-linked (GlcNAc...) asparagine glycosylation is found at Asn1099, Asn1147, and Asn1152.

May belong to a multimeric complex. Binds specifically to collagen type XIV. It depends on Zn(2+) as a cofactor. Post-translationally, the precursor is cleaved by a furin endopeptidase. In terms of processing, glycosylated. Can be O-fucosylated by POFUT2 on a serine or a threonine residue found within the consensus sequence C1-X(2)-(S/T)-C2-G of the TSP type-1 repeat domains where C1 and C2 are the first and second cysteine residue of the repeat, respectively. Fucosylated repeats can then be further glycosylated by the addition of a beta-1,3-glucose residue by the glucosyltransferase, B3GALTL. Fucosylation mediates the efficient secretion of ADAMTS family members. Can also be C-glycosylated with one or two mannose molecules on tryptophan residues within the consensus sequence W-X-X-W of the TPRs, and N-glycosylated. These other glycosylations can also facilitate secretion.

The protein localises to the secreted. The protein resides in the extracellular space. It localises to the extracellular matrix. The enzyme catalyses Cleaves the N-propeptide of collagen chain alpha1(I) at Pro-|-Gln and of alpha1(II) and alpha2(I) at Ala-|-Gln.. Its function is as follows. Cleaves the propeptides of type I and II collagen prior to fibril assembly. Does not act on type III collagen. Cleaves lysyl oxidase LOX at a site downstream of its propeptide cleavage site to produce a short LOX form with reduced collagen-binding activity. The protein is A disintegrin and metalloproteinase with thrombospondin motifs 2 (Adamts2) of Mus musculus (Mouse).